Consider the following 631-residue polypeptide: Phosphomethylpyrimidine synthase (631 aa).

Substrate is bound by residues N239, M268, Y297, H333, 353 to 355, 394 to 397, and E433; these read SRG and DGLR. H437 contributes to the Zn(2+) binding site. Y460 contacts substrate. Position 501 (H501) interacts with Zn(2+). Positions 581, 584, and 589 each coordinate [4Fe-4S] cluster.

It belongs to the ThiC family. In terms of assembly, homodimer. Requires [4Fe-4S] cluster as cofactor.

The enzyme catalyses 5-amino-1-(5-phospho-beta-D-ribosyl)imidazole + S-adenosyl-L-methionine = 4-amino-2-methyl-5-(phosphooxymethyl)pyrimidine + CO + 5'-deoxyadenosine + formate + L-methionine + 3 H(+). Its pathway is cofactor biosynthesis; thiamine diphosphate biosynthesis. Functionally, catalyzes the synthesis of the hydroxymethylpyrimidine phosphate (HMP-P) moiety of thiamine from aminoimidazole ribotide (AIR) in a radical S-adenosyl-L-methionine (SAM)-dependent reaction. In Salmonella enteritidis PT4 (strain P125109), this protein is Phosphomethylpyrimidine synthase.